Consider the following 131-residue polypeptide: Large ribosomal subunit protein bL17 (131 aa).

The protein belongs to the bacterial ribosomal protein bL17 family. As to quaternary structure, part of the 50S ribosomal subunit. Contacts protein L32.

This chain is Large ribosomal subunit protein bL17, found in Thermotoga sp. (strain RQ2).